Reading from the N-terminus, the 618-residue chain is 1-deoxy-D-xylulose-5-phosphate synthase (618 aa).

Residues His70 and 111-113 contribute to the thiamine diphosphate site; that span reads GHS. Asp142 lines the Mg(2+) pocket. Thiamine diphosphate contacts are provided by residues 143-144, Asn171, Tyr278, and Glu360; that span reads GS. Asn171 contributes to the Mg(2+) binding site.

Belongs to the transketolase family. DXPS subfamily. As to quaternary structure, homodimer. Requires Mg(2+) as cofactor. The cofactor is thiamine diphosphate.

It carries out the reaction D-glyceraldehyde 3-phosphate + pyruvate + H(+) = 1-deoxy-D-xylulose 5-phosphate + CO2. It functions in the pathway metabolic intermediate biosynthesis; 1-deoxy-D-xylulose 5-phosphate biosynthesis; 1-deoxy-D-xylulose 5-phosphate from D-glyceraldehyde 3-phosphate and pyruvate: step 1/1. Its function is as follows. Catalyzes the acyloin condensation reaction between C atoms 2 and 3 of pyruvate and glyceraldehyde 3-phosphate to yield 1-deoxy-D-xylulose-5-phosphate (DXP). The polypeptide is 1-deoxy-D-xylulose-5-phosphate synthase (Helicobacter pylori (strain G27)).